The following is a 1413-amino-acid chain: DNA-directed RNA polymerase subunit beta' (1413 aa).

Positions 70, 72, 85, and 88 each coordinate Zn(2+). 3 residues coordinate Mg(2+): Asp460, Asp462, and Asp464. Cys814, Cys888, Cys895, and Cys898 together coordinate Zn(2+).

This sequence belongs to the RNA polymerase beta' chain family. As to quaternary structure, the RNAP catalytic core consists of 2 alpha, 1 beta, 1 beta' and 1 omega subunit. When a sigma factor is associated with the core the holoenzyme is formed, which can initiate transcription. The cofactor is Mg(2+). Requires Zn(2+) as cofactor.

The enzyme catalyses RNA(n) + a ribonucleoside 5'-triphosphate = RNA(n+1) + diphosphate. In terms of biological role, DNA-dependent RNA polymerase catalyzes the transcription of DNA into RNA using the four ribonucleoside triphosphates as substrates. In Buchnera aphidicola subsp. Schizaphis graminum (strain Sg), this protein is DNA-directed RNA polymerase subunit beta'.